A 187-amino-acid polypeptide reads, in one-letter code: Epididymal-specific lipocalin-10 (187 aa).

Residues 1–19 form the signal peptide; it reads MRQGLLVLALVLVLVLVLA. Cys90 and Cys163 are oxidised to a cystine. Asn149 carries an N-linked (GlcNAc...) asparagine glycan. N6-acetyllysine is present on Lys170.

Belongs to the calycin superfamily. Lipocalin family.

The protein resides in the secreted. In terms of biological role, may play a role in male fertility. May act as a retinoid carrier protein within the epididymis. This chain is Epididymal-specific lipocalin-10 (LCN10), found in Homo sapiens (Human).